The sequence spans 195 residues: Elongation factor P (195 aa).

Belongs to the elongation factor P family.

It is found in the cytoplasm. It functions in the pathway protein biosynthesis; polypeptide chain elongation. Its function is as follows. Involved in peptide bond synthesis. Stimulates efficient translation and peptide-bond synthesis on native or reconstituted 70S ribosomes in vitro. Probably functions indirectly by altering the affinity of the ribosome for aminoacyl-tRNA, thus increasing their reactivity as acceptors for peptidyl transferase. This Rhodopirellula baltica (strain DSM 10527 / NCIMB 13988 / SH1) protein is Elongation factor P.